Here is an 808-residue protein sequence, read N- to C-terminus: Protein translocase subunit SecA 2 (808 aa).

ATP contacts are provided by residues Gln-124, 142 to 146 (GEGKT), and Asp-535.

The protein belongs to the SecA family. In terms of assembly, monomer and homodimer. Part of the essential Sec protein translocation apparatus which comprises SecA, SecYEG and auxiliary proteins SecDF. Other proteins may also be involved.

The protein localises to the cell membrane. It localises to the cytoplasm. The catalysed reaction is ATP + H2O + cellular proteinSide 1 = ADP + phosphate + cellular proteinSide 2.. In terms of biological role, part of the Sec protein translocase complex. Interacts with the SecYEG preprotein conducting channel. Has a central role in coupling the hydrolysis of ATP to the transfer of proteins into and across the cell membrane, serving as an ATP-driven molecular motor driving the stepwise translocation of polypeptide chains across the membrane. The chain is Protein translocase subunit SecA 2 from Mycobacterium bovis (strain BCG / Pasteur 1173P2).